We begin with the raw amino-acid sequence, 193 residues long: Cysteine and glycine-rich protein 2 (193 aa).

Residues 10–61 (CGACGRTVYHAEEVQCDGRTFHRCCFLCMVCRKNLDSTTVAIHDEEIYCKSC) enclose the LIM zinc-binding 1 domain. A Nuclear localization signal motif is present at residues 64–69 (KKYGPK). Residue K91 forms a Glycyl lysine isopeptide (Lys-Gly) (interchain with G-Cter in SUMO2) linkage. 2 positions are modified to N6-acetyllysine: K112 and K131. Residues 119-170 (CSRCGDSVYAAEKIIGAGKPWHKNCFRCAKCGKSLESTTLTEKEGEIYCKGC) form the LIM zinc-binding 2 domain. Residue K137 is modified to N6-acetyllysine; alternate. K137 bears the N6-succinyllysine; alternate mark. K161 bears the N6-acetyllysine mark.

Interacts with KAT14. The LIM domain 1 is necessary and sufficient for this interaction. Interacts with GLRX3. As to expression, highly expressed in the aorta; weakly found in the kidney, thymus, and intestine. Barely detectable in brain, testis, esophagus, lung, liver, aortic adventitia, vena cava, or uterus; not present in heart and skeletal muscle.

It localises to the nucleus. In terms of biological role, drastically down-regulated in response to PDGF-BB or cell injury, that promote smooth muscle cell proliferation and dedifferentiation. Seems to play a role in the development of the embryonic vascular system. The protein is Cysteine and glycine-rich protein 2 (Csrp2) of Rattus norvegicus (Rat).